Consider the following 3996-residue polypeptide: Probable E3 ubiquitin-protein ligase HECTD4 (3996 aa).

Residues 282–302 (TCIIRCILVVFQVVFKFFFSP) traverse the membrane as a helical segment. The span at 1494–1510 (PTASEPDTTLTKTSPKN) shows a compositional bias: polar residues. Disordered stretches follow at residues 1494 to 1524 (PTASEPDTTLTKTSPKNSLKGDKDPGEESEA) and 1616 to 1637 (PETVSGLSTGDKKKTAQTSICR). Thr2080 carries the post-translational modification Phosphothreonine. Disordered stretches follow at residues 2219 to 2245 (FITSGPDPHPPPIADDESDDDDDDDIP), 2859 to 2919 (TSAT…PTVL), 3017 to 3053 (EDTKKPKDKAEGGDGKVEPEKTLAFPGTDSMEVSTSS), and 3327 to 3403 (FDKS…QEVP). A compositionally biased stretch (acidic residues) spans 2232-2245 (ADDESDDDDDDDIP). Positions 2866 to 2887 (LSDSSSSSSSSPGQTPQSPSLL) are enriched in low complexity. A compositionally biased stretch (basic residues) spans 2888–2897 (SKRKKVKMKR). Composition is skewed to basic and acidic residues over residues 3017-3037 (EDTKKPKDKAEGGDGKVEPEK), 3327-3341 (FDKSKYSKAGKEQHP), and 3370-3403 (LSEKKPTVKPKSPEKSKPDEKDPEKSPTKKQEVP). The HECT domain maps to 3627–3996 (SGGDPTYAFN…IHYREDPLSG (370 aa)). Cys3964 serves as the catalytic Glycyl thioester intermediate.

The protein localises to the membrane. The enzyme catalyses S-ubiquitinyl-[E2 ubiquitin-conjugating enzyme]-L-cysteine + [acceptor protein]-L-lysine = [E2 ubiquitin-conjugating enzyme]-L-cysteine + N(6)-ubiquitinyl-[acceptor protein]-L-lysine.. Its pathway is protein modification; protein ubiquitination. E3 ubiquitin-protein ligase which accepts ubiquitin from an E2 ubiquitin-conjugating enzyme in the form of a thioester and then directly transfers the ubiquitin to targeted substrates. This is Probable E3 ubiquitin-protein ligase HECTD4 (HECTD4) from Homo sapiens (Human).